The primary structure comprises 408 residues: LL-diaminopimelate aminotransferase (408 aa).

Y15 and G42 together coordinate substrate. Pyridoxal 5'-phosphate contacts are provided by residues Y72, 108–109, Y132, N187, Y218, and 246–248; these read SK and SFS. The substrate site is built by K109, Y132, and N187. An N6-(pyridoxal phosphate)lysine modification is found at K249. Residues R257 and N292 each coordinate pyridoxal 5'-phosphate. The substrate site is built by N292 and R388.

The protein belongs to the class-I pyridoxal-phosphate-dependent aminotransferase family. LL-diaminopimelate aminotransferase subfamily. As to quaternary structure, homodimer. Pyridoxal 5'-phosphate serves as cofactor.

The catalysed reaction is (2S,6S)-2,6-diaminopimelate + 2-oxoglutarate = (S)-2,3,4,5-tetrahydrodipicolinate + L-glutamate + H2O + H(+). Its pathway is amino-acid biosynthesis; L-lysine biosynthesis via DAP pathway; LL-2,6-diaminopimelate from (S)-tetrahydrodipicolinate (aminotransferase route): step 1/1. In terms of biological role, involved in the synthesis of meso-diaminopimelate (m-DAP or DL-DAP), required for both lysine and peptidoglycan biosynthesis. Catalyzes the direct conversion of tetrahydrodipicolinate to LL-diaminopimelate. This chain is LL-diaminopimelate aminotransferase, found in Leptospira interrogans serogroup Icterohaemorrhagiae serovar Lai (strain 56601).